The sequence spans 757 residues: 5-methyltetrahydropteroyltriglutamate--homocysteine methyltransferase (757 aa).

5-methyltetrahydropteroyltri-L-glutamate-binding positions include 16-19 (RELK) and Lys-112. L-homocysteine-binding positions include 432-434 (IGS) and Glu-485. L-methionine-binding positions include 432 to 434 (IGS) and Glu-485. 5-methyltetrahydropteroyltri-L-glutamate-binding positions include 516–517 (RC) and Trp-562. Asp-600 contacts L-homocysteine. Asp-600 lines the L-methionine pocket. Residue Glu-606 participates in 5-methyltetrahydropteroyltri-L-glutamate binding. Residues His-642, Cys-644, and Glu-666 each contribute to the Zn(2+) site. Residue His-695 is the Proton donor of the active site. Cys-727 is a binding site for Zn(2+).

This sequence belongs to the vitamin-B12 independent methionine synthase family. Zn(2+) is required as a cofactor.

The enzyme catalyses 5-methyltetrahydropteroyltri-L-glutamate + L-homocysteine = tetrahydropteroyltri-L-glutamate + L-methionine. It participates in amino-acid biosynthesis; L-methionine biosynthesis via de novo pathway; L-methionine from L-homocysteine (MetE route): step 1/1. Its function is as follows. Catalyzes the transfer of a methyl group from 5-methyltetrahydrofolate to homocysteine resulting in methionine formation. In Actinobacillus pleuropneumoniae serotype 7 (strain AP76), this protein is 5-methyltetrahydropteroyltriglutamate--homocysteine methyltransferase.